Reading from the N-terminus, the 250-residue chain is Capsid protein (250 aa).

The interval 1 to 31 is disordered; the sequence is MPKRDAPWLMAGTSKVSRSGNYSPSGGMGSK. The Bipartite nuclear localization signal motif lies at 3–19; sequence KRDAPWLMAGTSKVSRS. Positions 14-31 are enriched in polar residues; sequence SKVSRSGNYSPSGGMGSK. Residues 34–48 carry the Nuclear localization signal motif; it reads KANAWVNRPMYRKPR. A zinc finger spans residues 53–70; sequence YKSPDVPKGCEGPCKVQS. A Nuclear export signal motif is present at residues 95–116; it reads ITHRVGKRFCVKSVYILGKIWM. The Bipartite nuclear localization signal signature appears at 194-241; that stretch reads RRFWKVNNHVVYNHQEAGKYENHTENALLLYMACTHASNPVYATLKIR.

The protein belongs to the geminiviridae capsid protein family. Homomultimer. Binds to single-stranded and double-stranded viral DNA. Interacts (via nuclear localization signals) with host importin alpha-1a.

It is found in the virion. The protein localises to the host nucleus. In terms of biological role, encapsidates the viral DNA into characteristic twinned ('geminate') particles. Binds the genomic viral ssDNA and shuttles it into and out of the cell nucleus. The CP of bipartite geminiviruses is not required for cell-to-cell or systemic movement. The sequence is that of Capsid protein from Bean golden yellow mosaic virus (isolate Puerto Rico) (BGYMV).